A 486-amino-acid chain; its full sequence is G2/mitotic-specific cyclin-4 (486 aa).

Disordered stretches follow at residues 1-80 (MRSY…SSNK) and 105-126 (VLLNDDDDETDDEFDDEEDKEN). Positions 25 to 41 (ANLSSNHTTAGQPSTSS) are enriched in polar residues. The span at 108 to 123 (NDDDDETDDEFDDEED) shows a compositional bias: acidic residues. Residues 122 to 184 (EDKENRYHDL…QSHTQDMRSI (63 aa)) adopt a coiled-coil conformation. The region spanning 234–359 (EIFNYLHELE…FMIDVLEFDL (126 aa)) is the Cyclin N-terminal domain.

Belongs to the cyclin family. Cyclin AB subfamily. As to quaternary structure, interacts with IQG1.

Its function is as follows. 2/mitotic-specific cyclin essential for the control of the cell cycle at the G2/M (mitosis) transition. G2/M cyclins accumulate steadily during G2 and are abruptly destroyed at mitosis. Degradation is necessary for the cell to exit from mitosis. Plays a role in morphogenesis by negatively regulating polarized growth. Through binding to CDC28 regulates cytokinesis, partly by phosphorylation of the actomyosin ring component IQG1. This is G2/mitotic-specific cyclin-4 (CLB4) from Candida albicans (strain SC5314 / ATCC MYA-2876) (Yeast).